The chain runs to 175 residues: MTINFKDYIASVQDYPEPGIIFRDISPLMADGKAYAAATDEIAAYAQDKGVEMIVGPEARGFIVGCPVAYKLGIGFAPARKKGKLPRPTVKASYDLEYGEATLYLHKDAIKPGQRVLVCDDLLATGGTIAATIRLVEQLGGIVVGTAFLIELSDLHGRDKIKDYDMFTLMSYTGA.

It belongs to the purine/pyrimidine phosphoribosyltransferase family. As to quaternary structure, homodimer.

Its subcellular location is the cytoplasm. It catalyses the reaction AMP + diphosphate = 5-phospho-alpha-D-ribose 1-diphosphate + adenine. It functions in the pathway purine metabolism; AMP biosynthesis via salvage pathway; AMP from adenine: step 1/1. In terms of biological role, catalyzes a salvage reaction resulting in the formation of AMP, that is energically less costly than de novo synthesis. The polypeptide is Adenine phosphoribosyltransferase (Lacticaseibacillus paracasei (strain ATCC 334 / BCRC 17002 / CCUG 31169 / CIP 107868 / KCTC 3260 / NRRL B-441) (Lactobacillus paracasei)).